We begin with the raw amino-acid sequence, 583 residues long: Pyruvate kinase isozyme A, chloroplastic (583 aa).

The transit peptide at 1-74 directs the protein to the chloroplast; sequence MSQSLHFSPN…NSGVLYNNNN (74 aa). The span at 43–52 shows a compositional bias: low complexity; the sequence is KASTSPSSSS. The interval 43–75 is disordered; it reads KASTSPSSSSDPQVLVADNGTGNSGVLYNNNNK. Residues 62–75 show a composition bias toward polar residues; that stretch reads GTGNSGVLYNNNNK. Position 134 (Arg134) interacts with substrate. Residues Asn136, Asp168, and Thr169 each coordinate K(+). 136-139 lines the ATP pocket; it reads NMCH. Residue Glu333 coordinates Mg(2+). Substrate contacts are provided by Gly356, Asp357, and Ser389. Mg(2+) is bound at residue Asp357.

Belongs to the pyruvate kinase family. Oligomer of alpha and beta subunits. Requires Mg(2+) as cofactor. K(+) serves as cofactor.

It is found in the plastid. The protein localises to the chloroplast. The enzyme catalyses pyruvate + ATP = phosphoenolpyruvate + ADP + H(+). It participates in carbohydrate degradation; glycolysis; pyruvate from D-glyceraldehyde 3-phosphate: step 5/5. The polypeptide is Pyruvate kinase isozyme A, chloroplastic (Ricinus communis (Castor bean)).